We begin with the raw amino-acid sequence, 665 residues long: GRB2-associated-binding protein 2 (665 aa).

At Ser2 the chain carries Phosphoserine. The PH domain maps to 8-119; it reads DVVCTGWLRK…WVQSICQICG (112 aa). Positions 131–183 are disordered; sequence RNLSSASHGPRSSPAEFSSSQHLLRERKSSAPSHSSQPTLFTFEPPMTSHMQP. 10 positions are modified to phosphoserine: Ser135, Ser142, Ser143, Ser149, Ser150, Ser160, Ser165, Ser211, Ser220, and Ser261. A compositionally biased stretch (polar residues) spans 160–170; that stretch reads SAPSHSSQPTL. Position 262 is a phosphothreonine (Thr262). Residue Tyr263 is modified to Phosphotyrosine. Phosphothreonine is present on Thr275. Residues Ser278 and Ser282 each carry the phosphoserine modification. Thr284 bears the Phosphothreonine mark. Tyr290 is subject to Phosphotyrosine. A Phosphothreonine modification is found at Thr328. 2 disordered regions span residues 340-442 and 491-517; these read TSGD…ENYV and PSRG…PTPL. Positions 348–355 match the SH3-binding motif; that stretch reads PPPRPPKP. Ser365 bears the Phosphoserine mark. Phosphothreonine occurs at positions 382 and 388. Ser402 bears the Phosphoserine mark. Thr405 is modified (phosphothreonine). The segment covering 412 to 423 has biased composition (low complexity); sequence GSGESASWSAES. Phosphoserine is present on residues Ser420 and Ser423. Tyr441 carries the phosphotyrosine modification. Residues 499–508 carry the SH3-binding motif; it reads PPPVNRNLKP. Ser532 is subject to Phosphoserine. Composition is skewed to polar residues over residues 548–566 and 578–600; these read SSSQ…STDS and NPVS…STGS. Residues 548–631 are disordered; that stretch reads SSSQYCRPIS…SSVTSDEKVD (84 aa). Phosphoserine is present on Ser612. Tyr632 carries the phosphotyrosine modification. A compositionally biased stretch (polar residues) spans 646–659; sequence TMQEWTDVRQSSEP. Residues 646 to 665 form a disordered region; it reads TMQEWTDVRQSSEPSKGAKL.

It belongs to the GAB family. As to quaternary structure, part of a complex composed of EEIG1, TNFRSF11A/RANK, PLCG2, GAB2, TEC and BTK; complex formation increases in the presence of TNFSF11/RANKL. Interacts with HCK. Interacts with SHC1; may mediate interaction with receptors. Interacts with SYK. Interacts with PI-3 kinase. Interacts with GRB2 (via SH3 2 domain). Interacts (phosphorylated) with PTPN11. Interacts with TNFRSF11A (via cytoplasmic domain). Interacts (phosphorylated) with 14-3-3 family proteins SFN, YWHAB, YWHAE, YWHAG, YWHAH, YWHAQ and YWHAZ; prevents interaction with GRB2 and attenuates GAB2 signaling. In terms of processing, phosphorylated upon EGF stimulation. Phosphorylated on tyrosine residues by HCK upon IL6 signaling. Phosphorylated on tyrosine residue(s) by the thrombopoietin receptor (TPOR), stem cell factor receptor (SCFR), and T-cell and B-cell antigen receptors, gp130, IL-2R and IL-3R. Phosphorylated upon stimulation of TNFRSF11A/RANK by TNFSF11/RANKL. Post-translationally, dephosphorylated by PTPN11.

The protein resides in the cytoplasm. It is found in the cell membrane. Its subcellular location is the membrane raft. Its function is as follows. Adapter protein which acts downstream of several membrane receptors including cytokine, antigen, hormone, cell matrix and growth factor receptors to regulate multiple signaling pathways. Regulates osteoclast differentiation mediating the TNFRSF11A/RANK signaling. In allergic response, it plays a role in mast cells activation and degranulation through PI-3-kinase regulation. Also involved in the regulation of cell proliferation and hematopoiesis. In Rattus norvegicus (Rat), this protein is GRB2-associated-binding protein 2 (Gab2).